A 369-amino-acid polypeptide reads, in one-letter code: Cytochrome b561 and DOMON domain-containing protein At3g07570 (369 aa).

Residues 1–22 (MKLYSVSIIIFVLIALSTIVNA) form the signal peptide. The DOMON domain maps to 55-167 (QNFILRYART…PRQSLLYAVG (113 aa)). Positions 174 to 369 (SSPDFRLREH…GLEVRKFLKK (196 aa)) constitute a Cytochrome b561 domain. The helical transmembrane segment at 212–232 (THGLMNMFGWGILIIVGAIVA) threads the bilayer. H213 and H246 together coordinate heme b. 2 helical membrane passes run 247 to 267 (IALQ…GLVL) and 279 to 299 (HKGL…ALLA). The heme b site is built by H279 and H315. The next 2 helical transmembrane spans lie at 321–341 (LLII…KAGT) and 343–363 (WNGG…GLEV).

Heme b serves as cofactor.

The protein resides in the membrane. In terms of biological role, may act as a catecholamine-responsive trans-membrane electron transporter. This is Cytochrome b561 and DOMON domain-containing protein At3g07570 from Arabidopsis thaliana (Mouse-ear cress).